The primary structure comprises 433 residues: Glucose-6-phosphate isomerase (433 aa).

The active-site Proton donor is the Glu-285. Catalysis depends on residues His-306 and Lys-421.

The protein belongs to the GPI family.

The protein localises to the cytoplasm. It carries out the reaction alpha-D-glucose 6-phosphate = beta-D-fructose 6-phosphate. The protein operates within carbohydrate biosynthesis; gluconeogenesis. It functions in the pathway carbohydrate degradation; glycolysis; D-glyceraldehyde 3-phosphate and glycerone phosphate from D-glucose: step 2/4. Its function is as follows. Catalyzes the reversible isomerization of glucose-6-phosphate to fructose-6-phosphate. The polypeptide is Glucose-6-phosphate isomerase (Mycoplasma mobile (strain ATCC 43663 / 163K / NCTC 11711) (Mesomycoplasma mobile)).